Reading from the N-terminus, the 350-residue chain is tRNA N6-adenosine threonylcarbamoyltransferase (350 aa).

Fe cation is bound by residues His-109 and His-113. Substrate contacts are provided by residues 136–140, Asp-169, Gly-182, Asp-186, and Asn-284; that span reads TVSGG. Asp-312 is a binding site for Fe cation.

The protein belongs to the KAE1 / TsaD family. Fe(2+) is required as a cofactor.

It localises to the cytoplasm. The enzyme catalyses L-threonylcarbamoyladenylate + adenosine(37) in tRNA = N(6)-L-threonylcarbamoyladenosine(37) in tRNA + AMP + H(+). Required for the formation of a threonylcarbamoyl group on adenosine at position 37 (t(6)A37) in tRNAs that read codons beginning with adenine. Is involved in the transfer of the threonylcarbamoyl moiety of threonylcarbamoyl-AMP (TC-AMP) to the N6 group of A37, together with TsaE and TsaB. TsaD likely plays a direct catalytic role in this reaction. This Chlorobium chlorochromatii (strain CaD3) protein is tRNA N6-adenosine threonylcarbamoyltransferase.